Consider the following 435-residue polypeptide: uncharacterized protein (435 aa).

Residues Pro-7–Leu-58 form the F-box domain.

This is an uncharacterized protein from Caenorhabditis elegans.